Reading from the N-terminus, the 374-residue chain is S-adenosylmethionine:tRNA ribosyltransferase-isomerase (374 aa).

Belongs to the QueA family. As to quaternary structure, monomer.

The protein resides in the cytoplasm. It catalyses the reaction 7-aminomethyl-7-carbaguanosine(34) in tRNA + S-adenosyl-L-methionine = epoxyqueuosine(34) in tRNA + adenine + L-methionine + 2 H(+). It functions in the pathway tRNA modification; tRNA-queuosine biosynthesis. Its function is as follows. Transfers and isomerizes the ribose moiety from AdoMet to the 7-aminomethyl group of 7-deazaguanine (preQ1-tRNA) to give epoxyqueuosine (oQ-tRNA). The polypeptide is S-adenosylmethionine:tRNA ribosyltransferase-isomerase (Prochlorococcus marinus (strain MIT 9215)).